The following is a 198-amino-acid chain: tRNA (pseudouridine(54)-N(1))-methyltransferase (198 aa).

Leu-128 provides a ligand contact to S-adenosyl-L-methionine.

Belongs to the methyltransferase superfamily. TrmY family. In terms of assembly, homodimer.

It is found in the cytoplasm. It catalyses the reaction pseudouridine(54) in tRNA + S-adenosyl-L-methionine = N(1)-methylpseudouridine(54) in tRNA + S-adenosyl-L-homocysteine + H(+). Its function is as follows. Specifically catalyzes the N1-methylation of pseudouridine at position 54 (Psi54) in tRNAs. The chain is tRNA (pseudouridine(54)-N(1))-methyltransferase from Natronomonas pharaonis (strain ATCC 35678 / DSM 2160 / CIP 103997 / JCM 8858 / NBRC 14720 / NCIMB 2260 / Gabara) (Halobacterium pharaonis).